The primary structure comprises 114 residues: NADH-ubiquinone oxidoreductase chain 3 (114 aa).

Transmembrane regions (helical) follow at residues 3–23 (LITLIIMAMAMTTALYTINTY), 52–72 (IQFFLVAILFILFDLEIVLLL), and 86–106 (TILLITMLLTILTLGLLYEWL).

The protein belongs to the complex I subunit 3 family.

The protein localises to the mitochondrion membrane. It catalyses the reaction a ubiquinone + NADH + 5 H(+)(in) = a ubiquinol + NAD(+) + 4 H(+)(out). In terms of biological role, core subunit of the mitochondrial membrane respiratory chain NADH dehydrogenase (Complex I) that is believed to belong to the minimal assembly required for catalysis. Complex I functions in the transfer of electrons from NADH to the respiratory chain. The immediate electron acceptor for the enzyme is believed to be ubiquinone. The protein is NADH-ubiquinone oxidoreductase chain 3 (MT-ND3) of Lycodon semicarinatus (Ryukyu odd-tooth snake).